Reading from the N-terminus, the 212-residue chain is uncharacterized protein (212 aa).

Positions 53, 74, and 97 each coordinate S-adenosyl-L-methionine.

The protein belongs to the methyltransferase superfamily. YrrT family.

In terms of biological role, could be a S-adenosyl-L-methionine-dependent methyltransferase. This is an uncharacterized protein from Bacillus cytotoxicus (strain DSM 22905 / CIP 110041 / 391-98 / NVH 391-98).